A 58-amino-acid polypeptide reads, in one-letter code: uncharacterized protein (58 aa).

Residues 12 to 32 (VALVYISVYFFSCISLIVYFF) form a helical membrane-spanning segment.

Its subcellular location is the membrane. This is an uncharacterized protein from Saccharomyces cerevisiae (strain ATCC 204508 / S288c) (Baker's yeast).